The sequence spans 710 residues: Integrator complex subunit 10 (710 aa).

A phosphoserine mark is found at Ser-231, Ser-381, and Ser-382. Lys-464 is covalently cross-linked (Glycyl lysine isopeptide (Lys-Gly) (interchain with G-Cter in SUMO2)).

Belongs to the Integrator subunit 10 family. Component of the Integrator complex, composed of core subunits INTS1, INTS2, INTS3, INTS4, INTS5, INTS6, INTS7, INTS8, INTS9/RC74, INTS10, INTS11/CPSF3L, INTS12, INTS13, INTS14 and INTS15. The core complex associates with protein phosphatase 2A subunits PPP2CA and PPP2R1A, to form the Integrator-PP2A (INTAC) complex. INTS10 is part of the tail subcomplex, composed of INTS10, INTS13, INTS14 and INTS15.

The protein resides in the nucleus. Component of the integrator complex, a multiprotein complex that terminates RNA polymerase II (Pol II) transcription in the promoter-proximal region of genes. The integrator complex provides a quality checkpoint during transcription elongation by driving premature transcription termination of transcripts that are unfavorably configured for transcriptional elongation: the complex terminates transcription by (1) catalyzing dephosphorylation of the C-terminal domain (CTD) of Pol II subunit POLR2A/RPB1 and SUPT5H/SPT5, (2) degrading the exiting nascent RNA transcript via endonuclease activity and (3) promoting the release of Pol II from bound DNA. The integrator complex is also involved in terminating the synthesis of non-coding Pol II transcripts, such as enhancer RNAs (eRNAs), small nuclear RNAs (snRNAs), telomerase RNAs and long non-coding RNAs (lncRNAs). Within the integrator complex, INTS10 is part of the integrator tail module that acts as a platform for the recruitment of transcription factors at promoters. May be not involved in the recruitment of cytoplasmic dynein to the nuclear envelope, probably as component of the integrator complex. The chain is Integrator complex subunit 10 (Ints10) from Mus musculus (Mouse).